The chain runs to 738 residues: Phosphoribosylformylglycinamidine synthase subunit PurL (738 aa).

Residue His53 is part of the active site. ATP-binding residues include Tyr56 and Lys95. Glu97 is a binding site for Mg(2+). Residues 98-101 and Arg120 contribute to the substrate site; that span reads SHNH. The active-site Proton acceptor is His99. Mg(2+) is bound at residue Asp121. Substrate is bound at residue Gln244. Asp274 is a Mg(2+) binding site. 318–320 lines the substrate pocket; sequence ESQ. ATP contacts are provided by Asp499 and Gly536. Asn537 provides a ligand contact to Mg(2+). Position 539 (Ser539) interacts with substrate.

The protein belongs to the FGAMS family. Monomer. Part of the FGAM synthase complex composed of 1 PurL, 1 PurQ and 2 PurS subunits.

It is found in the cytoplasm. It carries out the reaction N(2)-formyl-N(1)-(5-phospho-beta-D-ribosyl)glycinamide + L-glutamine + ATP + H2O = 2-formamido-N(1)-(5-O-phospho-beta-D-ribosyl)acetamidine + L-glutamate + ADP + phosphate + H(+). It functions in the pathway purine metabolism; IMP biosynthesis via de novo pathway; 5-amino-1-(5-phospho-D-ribosyl)imidazole from N(2)-formyl-N(1)-(5-phospho-D-ribosyl)glycinamide: step 1/2. Functionally, part of the phosphoribosylformylglycinamidine synthase complex involved in the purines biosynthetic pathway. Catalyzes the ATP-dependent conversion of formylglycinamide ribonucleotide (FGAR) and glutamine to yield formylglycinamidine ribonucleotide (FGAM) and glutamate. The FGAM synthase complex is composed of three subunits. PurQ produces an ammonia molecule by converting glutamine to glutamate. PurL transfers the ammonia molecule to FGAR to form FGAM in an ATP-dependent manner. PurS interacts with PurQ and PurL and is thought to assist in the transfer of the ammonia molecule from PurQ to PurL. In Leuconostoc mesenteroides subsp. mesenteroides (strain ATCC 8293 / DSM 20343 / BCRC 11652 / CCM 1803 / JCM 6124 / NCDO 523 / NBRC 100496 / NCIMB 8023 / NCTC 12954 / NRRL B-1118 / 37Y), this protein is Phosphoribosylformylglycinamidine synthase subunit PurL.